A 363-amino-acid chain; its full sequence is MSPSIVFTGGGTAGHVTPNIALIKEFRKEGWNVEYIGSVSGIEKEMIEPLDIPFHGVSSGKLRRYFSLKNLLDPFKIVLGIIQSSLLFYKIKPDVVFSKGGFVAFPVVVGAWLNRIPVVAHESDMSPGLANRLSFPFVNKICLTFDAGKKYFKRQDKIEVTGTPIRQQLLTGNRMKGLELCGFNSSKPCLLVVGGSLGAGSINSCIRSALKQLTSEFQVIHLCGKGKLDSSLVGVEGYCQFEYANEELADLFAASSVVISRAGANSLYEILALGKPHILIPISSQVSRGDQIQNARYFQGLGISVVIQDELLKADVLLQALQDVMRKKDEIDNKIKALKIESATDKIVAIIKEQAHVQTPRIV.

UDP-N-acetyl-alpha-D-glucosamine is bound by residues 12–14 (TAG), arginine 166, serine 196, and glutamine 291.

It belongs to the glycosyltransferase 28 family. MurG subfamily.

The protein resides in the cell inner membrane. The catalysed reaction is di-trans,octa-cis-undecaprenyl diphospho-N-acetyl-alpha-D-muramoyl-L-alanyl-D-glutamyl-meso-2,6-diaminopimeloyl-D-alanyl-D-alanine + UDP-N-acetyl-alpha-D-glucosamine = di-trans,octa-cis-undecaprenyl diphospho-[N-acetyl-alpha-D-glucosaminyl-(1-&gt;4)]-N-acetyl-alpha-D-muramoyl-L-alanyl-D-glutamyl-meso-2,6-diaminopimeloyl-D-alanyl-D-alanine + UDP + H(+). It functions in the pathway cell wall biogenesis; peptidoglycan biosynthesis. Its function is as follows. Cell wall formation. Catalyzes the transfer of a GlcNAc subunit on undecaprenyl-pyrophosphoryl-MurNAc-pentapeptide (lipid intermediate I) to form undecaprenyl-pyrophosphoryl-MurNAc-(pentapeptide)GlcNAc (lipid intermediate II). In Legionella pneumophila (strain Lens), this protein is UDP-N-acetylglucosamine--N-acetylmuramyl-(pentapeptide) pyrophosphoryl-undecaprenol N-acetylglucosamine transferase.